The primary structure comprises 176 residues: Large ribosomal subunit protein uL6 (176 aa).

The protein belongs to the universal ribosomal protein uL6 family. In terms of assembly, part of the 50S ribosomal subunit.

Its function is as follows. This protein binds to the 23S rRNA, and is important in its secondary structure. It is located near the subunit interface in the base of the L7/L12 stalk, and near the tRNA binding site of the peptidyltransferase center. The protein is Large ribosomal subunit protein uL6 of Lactobacillus delbrueckii subsp. bulgaricus (strain ATCC 11842 / DSM 20081 / BCRC 10696 / JCM 1002 / NBRC 13953 / NCIMB 11778 / NCTC 12712 / WDCM 00102 / Lb 14).